Consider the following 88-residue polypeptide: Large ribosomal subunit protein bL31B (88 aa).

Belongs to the bacterial ribosomal protein bL31 family. Type B subfamily. As to quaternary structure, part of the 50S ribosomal subunit.

This is Large ribosomal subunit protein bL31B from Bordetella pertussis (strain Tohama I / ATCC BAA-589 / NCTC 13251).